The primary structure comprises 1335 residues: MTRTTVDELVFFVNGKKVVEKNADPETTLLVYLRRKLGLCGTKLGCGEGGCGACTVMISKYDRLQNKIVHFSVNACLTPICSLHHVAVTTVEGIGNTKKLHPVQERIAKSHGSQCGFCTPGIVMSMYTLLRNKPEPTVEEIENAFQGNLCRCTGYRPILQGFRTFAKDGGCCGGSGNNPNCCMSQTKDQTIAPSSSLFNPEDFKPLDPTQEPIFPPELLRLKDTPRKTLRFEGERVTWIQVSTMEELLDLKAQHPDAKLVVGNTEIGIEMKFKNMLFPLIICPAWILELTSVAHGPEGISFGAACPLSLVESVLADAIATLPEQRTEVFRGVMEQLRWFAGKQVKSVASIGGNIITASPISDLNPVLMASRAKLTLASRGTKRTVWMDHTFFPGYRRTLLSPEEILVSIVIPYSRKGEFFSAFKQASRREDDIAKVTSGMRVLFKPGTTEVQELSLCFGGMADRTVSALKTTPKQLSKSWNEELLQDVCAGLAEELHLAPDAPGGMVEFRRTLTLSFFFKFYLTVLQKLGRADLEGMCGKLDPTFASATLLFQKDPPANVQLFQEVPKGQSEEDMVGRPMPHLAADMQASGEAVYCDDIPRYENELSLRLVTSTRAHAKIMSIDTSEAKKVPGFVCFLTSEDVPGSNITGIFNDETVFAKDEVTCVGHIIGAVVADTPEHAHRAARGVKITYEDLPAIITIQDAIKNNSFYGPEVKIEKGDLKKGFSEADNVVSGELYIGGQEHFYLETHCTIAVPKGEAGEMELFVSTQNTMKTQSFIAKMLGVPDNRIVVRVKRMGGGFGGKETRSTLISTAVALAAYKTGRPVRCMLDRDEDMLITGGRHPFLAKYKVGFMKTGTIVALEVAHFSNGGNSEDLSRSIMERAVFHMDNAYKIPNIRGTGRICKTNLPSNTAFRGFGGPQGMLIAEYWMSEVAVTCGLPAEEVRRKNMYKEGDLTHFNQKLEGFTLPRCWDECIASSQYQARKMEVEKFNRENCWKKRGLCIIPTKFGISFTLSFLNQGGALVHVYTDGSVLLTHGGTEMGQGLHTKMVQVASRALKIPTSKIHITETSTNTVPNTSPTAASASADLNGQAIYEACQTILKRLEPFKKKNPSGSWESWVMDAYTSAVSLSATGFYKTPNLGYSFETNSGNPFHYFSYGVACSEVEIDCLTGDHKNLRTDIVMDVGSSLNPAIDIGQVEGAFVQGLGLFTMEELHYSPEGSLHTRGPSTYKIPAFGSIPIEFRVSLLRDCPNKRAIYASKAVGEPPLFLASSIFFAIKDAIRAARAQHGDSNAKQLFQLDSPATPEKIRNACVDQFTTLCATGTPENCKSWSVRI.

The region spanning 7 to 94 is the 2Fe-2S ferredoxin-type domain; sequence DELVFFVNGK…HVAVTTVEGI (88 aa). Positions 46, 51, 54, 76, 115, 118, 150, and 152 each coordinate [2Fe-2S] cluster. The FAD-binding PCMH-type domain maps to 231-416; it reads FEGERVTWIQ…VSIVIPYSRK (186 aa). Residues 259–266, phenylalanine 339, 349–353, aspartate 362, leucine 406, and lysine 424 contribute to the FAD site; these read LVVGNTEI and SIGGN. Cysteine 538 and cysteine 995 are joined by a disulfide. Glutamine 770 and phenylalanine 801 together coordinate Mo-molybdopterin. Glutamate 805 and arginine 883 together coordinate substrate. Residue arginine 915 coordinates Mo-molybdopterin. Phenylalanine 917 and threonine 1013 together coordinate substrate. Alanine 1082 provides a ligand contact to Mo-molybdopterin. Glutamate 1264 acts as the Proton acceptor in catalysis.

Belongs to the xanthine dehydrogenase family. As to quaternary structure, homodimer. Interacts with BTN1A1. It depends on FAD as a cofactor. The cofactor is Mo-molybdopterin. [2Fe-2S] cluster is required as a cofactor. Post-translationally, subject to partial proteolysis; this alters the enzyme from the dehydrogenase form (D) to the oxidase form (O). Contains sulfhydryl groups that are easily oxidized (in vitro); this alters the enzyme from the dehydrogenase form (D) to the oxidase form (O).

Its subcellular location is the cytoplasm. The protein localises to the peroxisome. It localises to the secreted. It carries out the reaction xanthine + NAD(+) + H2O = urate + NADH + H(+). The catalysed reaction is hypoxanthine + NAD(+) + H2O = xanthine + NADH + H(+). It catalyses the reaction xanthine + O2 + H2O = urate + H2O2. With respect to regulation, can be converted from the dehydrogenase form (D) to the oxidase form (O) irreversibly by proteolysis or reversibly through the oxidation of sulfhydryl groups. In terms of biological role, key enzyme in purine degradation. Catalyzes the oxidation of hypoxanthine to xanthine. Catalyzes the oxidation of xanthine to uric acid. Contributes to the generation of reactive oxygen species. The chain is Xanthine dehydrogenase/oxidase (Xdh) from Mus musculus (Mouse).